Reading from the N-terminus, the 412-residue chain is Palmitoyltransferase ZDHHC11 (412 aa).

Residues 1–42 (MDTRSGSQCSVTPEAILNNEKLVLPPRISRVNGWSLPLHYFQ) lie on the Cytoplasmic side of the membrane. A helical membrane pass occupies residues 43–63 (VVTWAVFVGLSSATFGIFIPF). The Lumenal portion of the chain corresponds to 64 to 69 (LPHAWK). The helical transmembrane segment at 70 to 90 (YIAYVVTGGIFSFHLVVHLIA) threads the bilayer. Residues 91-176 (SCIDPADSNV…YWFFFSTVAS (86 aa)) are Cytoplasmic-facing. The DHHC domain maps to 125–175 (QFCHLCKVTVNKKTKHCISCNKCVSGFDHHCKWINNCVGSRNYWFFFSTVA). Cys155 (S-palmitoyl cysteine intermediate) is an active-site residue. The chain crosses the membrane as a helical span at residues 177-197 (ATAGMLCLIAILLYVLVQYLV). At 198–230 (NPGVLRTDPRYEDVKNMNTWLLFLPLFPVQVQT) the chain is on the lumenal side. Residues 198–412 (NPGVLRTDPR…MKTDSAESED (215 aa)) are mediates interaction with IRF3 and STING1. The chain crosses the membrane as a helical span at residues 231-251 (LIVVIIGMLVLLLDFLGLVHL). The Cytoplasmic segment spans residues 252-412 (GQLLIFHIYL…MKTDSAESED (161 aa)). A disordered region spans residues 374-412 (HPDGGSMAQEADDAPSISTLGLQQETTEPMKTDSAESED). Positions 389 to 400 (SISTLGLQQETT) are enriched in polar residues. A compositionally biased stretch (basic and acidic residues) spans 401–412 (EPMKTDSAESED).

Belongs to the DHHC palmitoyltransferase family. In terms of assembly, interacts with IRF3 and STING1; in presence of DNA viruses recruits IRF3 to STING1 promoting IRF3 phosphorylation and activation. Expressed in testis.

The protein resides in the endoplasmic reticulum membrane. It catalyses the reaction L-cysteinyl-[protein] + hexadecanoyl-CoA = S-hexadecanoyl-L-cysteinyl-[protein] + CoA. Endoplasmic reticulum-localized palmitoyltransferase that could catalyze the addition of palmitate onto various protein substrates and be involved in a variety of cellular processes. Has a palmitoyltransferase activity toward NCDN and regulates NCDN association with endosome membranes through this palmitoylation. May play a role in cell proliferation. Its function is as follows. Also has a palmitoyltransferase activity-independent function in DNA virus-triggered and CGAS-mediated innate immune response. Functions as an adapter that recruits IRF3 to STING1 to promote the activation of that key transcriptional regulator of type I interferon (IFN)-dependent immune response. The sequence is that of Palmitoyltransferase ZDHHC11 from Homo sapiens (Human).